The following is a 449-amino-acid chain: Glutamate--tRNA ligase 2 (449 aa).

A 'HIGH' region motif is present at residues 11–21; that stretch reads PSPTGFLHIGN. The 'KMSKS' region motif lies at 242–246; sequence GLSKR. Position 245 (Lys245) interacts with ATP.

The protein belongs to the class-I aminoacyl-tRNA synthetase family. Glutamate--tRNA ligase type 1 subfamily. As to quaternary structure, monomer.

It is found in the cytoplasm. It catalyses the reaction tRNA(Glu) + L-glutamate + ATP = L-glutamyl-tRNA(Glu) + AMP + diphosphate. Functionally, catalyzes the attachment of glutamate to tRNA(Glu) in a two-step reaction: glutamate is first activated by ATP to form Glu-AMP and then transferred to the acceptor end of tRNA(Glu). The sequence is that of Glutamate--tRNA ligase 2 from Methylorubrum populi (strain ATCC BAA-705 / NCIMB 13946 / BJ001) (Methylobacterium populi).